Reading from the N-terminus, the 285-residue chain is Foldase protein PrsA 2 (285 aa).

An N-terminal signal peptide occupies residues 1–20; sequence MRGKHIFIITALISILMLSA. Cys-21 carries N-palmitoyl cysteine lipidation. Cys-21 is lipidated: S-diacylglycerol cysteine. The region spanning 134–224 is the PpiC domain; it reads KPEIKASHIL…NGYHVIKLTD (91 aa).

Belongs to the PrsA family.

It localises to the cell membrane. The enzyme catalyses [protein]-peptidylproline (omega=180) = [protein]-peptidylproline (omega=0). Functionally, plays a major role in protein secretion by helping the post-translocational extracellular folding of several secreted proteins. This chain is Foldase protein PrsA 2 (prsA2), found in Bacillus cereus (strain ATCC 14579 / DSM 31 / CCUG 7414 / JCM 2152 / NBRC 15305 / NCIMB 9373 / NCTC 2599 / NRRL B-3711).